The chain runs to 413 residues: Peptidase T (413 aa).

Histidine 82 is a Zn(2+) binding site. Aspartate 84 is a catalytic residue. Residue aspartate 145 participates in Zn(2+) binding. Catalysis depends on glutamate 179, which acts as the Proton acceptor. Glutamate 180, aspartate 202, and histidine 384 together coordinate Zn(2+).

Belongs to the peptidase M20B family. The cofactor is Zn(2+).

It localises to the cytoplasm. It carries out the reaction Release of the N-terminal residue from a tripeptide.. Its function is as follows. Cleaves the N-terminal amino acid of tripeptides. The chain is Peptidase T from Latilactobacillus sakei subsp. sakei (strain 23K) (Lactobacillus sakei subsp. sakei).